The chain runs to 560 residues: uncharacterized protein (560 aa).

Topologically, residues 1–17 are cytoplasmic; sequence MEPKRKSGSLAKHDLPQ. Residues 18 to 38 traverse the membrane as a helical segment; sequence FYLLIMLYLAQGIPVGLAFGT. Residues 39–54 are Extracellular-facing; it reads VPFLLKSLAKETSFTS. The chain crosses the membrane as a helical span at residues 55–75; that stretch reads LGIFSMATYPYSLKIIWSPIV. Residues 76-88 lie on the Cytoplasmic side of the membrane; that stretch reads DSLYNKRIGRRRS. Residues 89–109 form a helical membrane-spanning segment; it reads WIIPVQFVSGFVLWALGWCIS. The Extracellular portion of the chain corresponds to 110 to 139; that stretch reads QGIIFDGVDDAFHNRGNGTLHSVSIKNLTW. A helical transmembrane segment spans residues 140–160; it reads WFGLLVFLCATQDIAVDGWAL. Residues 161 to 172 lie on the Cytoplasmic side of the membrane; that stretch reads TILSKESLSYAS. The helical transmembrane segment at 173–193 threads the bilayer; the sequence is TAQTIGLNIGYFMSFTIFLSL. The Extracellular portion of the chain corresponds to 194–214; it reads NSSDFANKYFRNIPLDHGFIS. The helical transmembrane segment at 215-235 threads the bilayer; it reads LGGYMKFSGMLYIVITIYIIF. Topologically, residues 236–329 are cytoplasmic; that stretch reads CTKEKPYVEY…KLLEQGFKRE (94 aa). Residues 330–350 form a helical membrane-spanning segment; the sequence is DLAVTVLIDLPFEIIFGYYVV. Over 351-374 the chain is Extracellular; the sequence is KWSSDKDPMIRDNRRLRNSTGTNK. The chain crosses the membrane as a helical span at residues 375-395; the sequence is VIKFLVGDAGVLTPWLWGFLG. Topologically, residues 396–421 are cytoplasmic; the sequence is RLAAAVLGSYVVKQFPKDGEISTGYF. The helical transmembrane segment at 422–442 threads the bilayer; that stretch reads CLVIFQHLLGSFMNTVQFIGI. Residues 443–521 are Extracellular-facing; that stretch reads SAFHTRVADP…LNGTVTILRD (79 aa). The chain crosses the membrane as a helical span at residues 522-542; the sequence is GYYITNLICIVVGLFLYFGYL. The Cytoplasmic portion of the chain corresponds to 543-560; the sequence is KRKILHLQSLPISSWRCT.

Its subcellular location is the membrane. This is an uncharacterized protein from Saccharomyces cerevisiae (strain ATCC 204508 / S288c) (Baker's yeast).